Here is a 986-residue protein sequence, read N- to C-terminus: Bifunctional glutamine synthetase adenylyltransferase/adenylyl-removing enzyme (986 aa).

Residues 1–473 (MTSSAPGNAD…HYARLFEGDP (473 aa)) are adenylyl removase. The interval 478–986 (SLPPVNYGAG…RRVFTALLER (509 aa)) is adenylyl transferase.

This sequence belongs to the GlnE family. Requires Mg(2+) as cofactor.

It catalyses the reaction [glutamine synthetase]-O(4)-(5'-adenylyl)-L-tyrosine + phosphate = [glutamine synthetase]-L-tyrosine + ADP. The catalysed reaction is [glutamine synthetase]-L-tyrosine + ATP = [glutamine synthetase]-O(4)-(5'-adenylyl)-L-tyrosine + diphosphate. Its function is as follows. Involved in the regulation of glutamine synthetase GlnA, a key enzyme in the process to assimilate ammonia. When cellular nitrogen levels are high, the C-terminal adenylyl transferase (AT) inactivates GlnA by covalent transfer of an adenylyl group from ATP to specific tyrosine residue of GlnA, thus reducing its activity. Conversely, when nitrogen levels are low, the N-terminal adenylyl removase (AR) activates GlnA by removing the adenylyl group by phosphorolysis, increasing its activity. The regulatory region of GlnE binds the signal transduction protein PII (GlnB) which indicates the nitrogen status of the cell. In Bradyrhizobium sp. (strain ORS 278), this protein is Bifunctional glutamine synthetase adenylyltransferase/adenylyl-removing enzyme.